Consider the following 387-residue polypeptide: Acetylserotonin O-methyltransferase (387 aa).

S-adenosyl-L-methionine-binding positions include Tyr153, Trp170, Glu216, 246–248, and Arg263; that span reads GDF. His266 (proton donor/acceptor) is an active-site residue. Residues Asp267 and Gln317 each coordinate substrate. The disordered stretch occupies residues 354–387; sequence AARGGGAGARSDGGGGDATSQTGSGTGSEVGAQD. The span at 356–370 shows a compositional bias: gly residues; sequence RGGGAGARSDGGGGD.

The protein belongs to the class I-like SAM-binding methyltransferase superfamily. Cation-independent O-methyltransferase family. As to quaternary structure, homodimer. As to expression, expressed predominantly in the pineal gland (at protein level). Very low expression, if any, in the retina.

It catalyses the reaction N-acetylserotonin + S-adenosyl-L-methionine = melatonin + S-adenosyl-L-homocysteine + H(+). The protein operates within aromatic compound metabolism; melatonin biosynthesis; melatonin from serotonin: step 1/2. Functionally, catalyzes the transfer of a methyl group onto N-acetylserotonin, producing melatonin (N-acetyl-5-methoxytryptamine). The polypeptide is Acetylserotonin O-methyltransferase (Asmt) (Mus musculus (Mouse)).